The primary structure comprises 93 residues: Large ribosomal subunit protein uL23cz/uL23cy (93 aa).

Belongs to the universal ribosomal protein uL23 family. Part of the 50S ribosomal subunit.

Its subcellular location is the plastid. The protein localises to the chloroplast. Its function is as follows. Binds to 23S rRNA. The chain is Large ribosomal subunit protein uL23cz/uL23cy (rpl23-A) from Drimys granadensis.